Here is a 202-residue protein sequence, read N- to C-terminus: ATP-dependent dethiobiotin synthetase BioD (202 aa).

Position 12 to 17 (12 to 17 (GIGKTI)) interacts with ATP. T16 serves as a coordination point for Mg(2+). K32 is a catalytic residue. Residue S36 coordinates substrate. ATP is bound by residues D43, 94–97 (EGAG), and 178–180 (PVV). Mg(2+) contacts are provided by D43 and E94.

This sequence belongs to the dethiobiotin synthetase family. As to quaternary structure, homodimer. It depends on Mg(2+) as a cofactor.

Its subcellular location is the cytoplasm. It carries out the reaction (7R,8S)-7,8-diammoniononanoate + CO2 + ATP = (4R,5S)-dethiobiotin + ADP + phosphate + 3 H(+). It functions in the pathway cofactor biosynthesis; biotin biosynthesis; biotin from 7,8-diaminononanoate: step 1/2. Its function is as follows. Catalyzes a mechanistically unusual reaction, the ATP-dependent insertion of CO2 between the N7 and N8 nitrogen atoms of 7,8-diaminopelargonic acid (DAPA, also called 7,8-diammoniononanoate) to form a ureido ring. This Sphingopyxis alaskensis (strain DSM 13593 / LMG 18877 / RB2256) (Sphingomonas alaskensis) protein is ATP-dependent dethiobiotin synthetase BioD.